We begin with the raw amino-acid sequence, 126 residues long: Histone H2B 5 (126 aa).

Residues Met-1–Lys-12 show a composition bias toward low complexity. The segment at Met-1–Lys-35 is disordered. N6-acetyllysine is present on residues Lys-6 and Lys-13. The span at Lys-13 to Arg-34 shows a compositional bias: basic residues. Residue Ser-15 is modified to Phosphoserine. 2 positions are modified to N6-acetyllysine: Lys-16 and Lys-21. An O-linked (GlcNAc) serine glycan is attached at Ser-113. Residue Lys-121 forms a Glycyl lysine isopeptide (Lys-Gly) (interchain with G-Cter in ubiquitin) linkage.

Belongs to the histone H2B family. The nucleosome is a histone octamer containing two molecules each of H2A, H2B, H3 and H4 assembled in one H3-H4 heterotetramer and two H2A-H2B heterodimers. The octamer wraps approximately 147 bp of DNA. In terms of processing, monoubiquitination of Lys-121 by the BRE1 gives a specific tag for epigenetic transcriptional activation and is also prerequisite for histone H3 'Lys-4' and 'Lys-79' methylation. Phosphorylated on Ser-15 during apoptosis; which facilitates apoptotic chromatin condensation. Post-translationally, glcNAcylation at Ser-113 promotes monoubiquitination of Lys-121. It fluctuates in response to extracellular glucose, and associates with transcribed genes.

The protein localises to the nucleus. The protein resides in the chromosome. Its function is as follows. Core component of nucleosome. Nucleosomes wrap and compact DNA into chromatin, limiting DNA accessibility to the cellular machineries which require DNA as a template. Histones thereby play a central role in transcription regulation, DNA repair, DNA replication and chromosomal stability. DNA accessibility is regulated via a complex set of post-translational modifications of histones, also called histone code, and nucleosome remodeling. In Gallus gallus (Chicken), this protein is Histone H2B 5 (H2B-V).